A 607-amino-acid polypeptide reads, in one-letter code: Guanine nucleotide-binding protein-like 1 (607 aa).

Residues Met-1–Lys-14 are compositionally biased toward basic residues. A disordered region spans residues Met-1–Tyr-81. Positions Gln-15–Leu-26 are enriched in basic and acidic residues. Residues Ser-32, Ser-33, and Ser-34 each carry the phosphoserine modification. A phosphothreonine mark is found at Thr-48 and Thr-50. Phosphoserine occurs at positions 51 and 68. One can recognise a CP-type G domain in the interval Trp-178–Pro-418. Asn-225–Asp-228 lines the GTP pocket. At Ser-324 the chain carries Phosphoserine. Residues Gly-367 to Ser-374 and Asp-411 to Leu-415 each bind GTP. Positions Gly-547–Cys-607 are disordered. A compositionally biased stretch (acidic residues) spans Gly-550–Thr-584. 3 positions are modified to phosphoserine: Ser-561, Ser-562, and Ser-563.

The protein belongs to the TRAFAC class YlqF/YawG GTPase family.

Its function is as follows. Possible regulatory or functional link with the histocompatibility cluster. This is Guanine nucleotide-binding protein-like 1 (GNL1) from Pongo abelii (Sumatran orangutan).